We begin with the raw amino-acid sequence, 975 residues long: MGAEEEVQVTLAGGAPWGFRLQGGTEQRKPLQIRRRSQAGRAGLRERDQLLAINGVSCTNFSHASAMTLIDASGRQLVLTVRRVTDEGSVRSPSPGELQVLSPLSPLSPEPPGAPVSQALQPTSLRSPPDSEAYYGETDSDVDGPATQEKPRRTRRRGPARPSLPGAPPDEVYLSDSPAEPAPVKTGSPSQGDSRVSSPSWEEGAALQPPPAEALLLPHGPLRPGPHLIPMVGPVPHPVAEDLTTTYTQKAKQAKLQRAESLQEKSVKEARTKCRTIASLLTAAPNPHSKGVLMFKKRRQRAKKYTLVSFGAAAGTGTEEEDGIPPTSESELDEETFSDARSLTNQSDWDSPYLDMELARAGLGTAESQNSGLGGQLSEVSGRGVQLFEQQRQRVASSSQELAQVGPAAMLNGQSLQSPPRAQSAPPEAAVLPLSPLSVPAVSPTPFFPDGGAPIPAPSIFNRSARPFTPGLQGQRSGTTSVIFRPLAPKKVNEGLGSTSPAPSPFAAPPQGPTPLPSFTTVVPSHTPVSGASSSTQRSSGPVTATSSLYIPAPSRPVTPGGAPEPPTPPSAAAMTSTASIFLSTPLRNSARPEAPGPAVPEPASVREQRISVPAARTGILQEARRRGTRKQMFRPGKEETKNSPNPELLSLVQNLDEKPRAGGAESGPEEDALSLGAEACNFMQPLGGRSYKTLPQVSPKTPPPMAPKTPPPTTPKTPPPVAPKPGSRGLLDGLVNGSTPMVGIPEPPRLQGRGGELFAKRQSRADRYVVEATSGSSLNPGLRPRSPSPTPSLPPSWKYSPNIRAPPPIAYNPLLSPFFPQAARTLPNKAQSQGPRVTPKQGIKALDFMRHQPYQLKTAMFCFDEGSSTPGPTSGPPKTARVQEIRRFSTPAPQPTAEPLAPTVLVPRAATTLDEPIWRAELASTPVPNPDHQESLRSFAAAPSSCGFQVARPRFSATRTGLQAHVWRPGAGHQ.

The PDZ domain occupies Glu-6 to Thr-85. Disordered regions lie at residues Gly-18–Arg-41, Asp-86–Ala-214, and Ala-314–Trp-349. Ser-105 and Ser-108 each carry phosphoserine. Thr-138 is modified (phosphothreonine). Ser-140, Ser-163, Ser-175, and Ser-177 each carry phosphoserine. Positions Gly-187–Ser-200 are enriched in polar residues. The segment covering Glu-202–Ala-214 has biased composition (low complexity). Positions Asp-339–Trp-349 are enriched in polar residues. Ser-342, Ser-347, Ser-371, Ser-378, and Ser-381 each carry phosphoserine. 4 positions are modified to omega-N-methylarginine: Arg-383, Arg-463, Arg-466, and Arg-476. A disordered region spans residues Lys-491–Leu-649. The span at Ala-502–Leu-516 shows a compositional bias: pro residues. A compositionally biased stretch (polar residues) spans Phe-519 to Pro-528. Low complexity-rich tracts occupy residues Ser-530–Ser-540 and Ser-571–Ser-580. Residues Ser-667 and Ser-675 each carry the phosphoserine modification. The disordered stretch occupies residues Leu-687 to Leu-731. Residues Lys-701 to Pro-724 are compositionally biased toward pro residues. Thr-702 and Thr-710 each carry phosphothreonine. Position 754 is an omega-N-methylarginine (Arg-754). Residues Glu-772–Ser-797 are disordered. 2 positions are modified to phosphoserine: Ser-787 and Ser-789. Thr-791 bears the Phosphothreonine mark. Arg-805, Arg-825, and Arg-888 each carry omega-N-methylarginine. Ser-890 carries the post-translational modification Phosphoserine. 2 positions are modified to phosphothreonine: Thr-891 and Thr-897. The residue at position 909 (Arg-909) is an Omega-N-methylarginine. Arg-920 carries the asymmetric dimethylarginine; alternate modification. Omega-N-methylarginine; alternate is present on Arg-920. Omega-N-methylarginine occurs at positions 953 and 955.

Belongs to the synaptopodin family.

It is found in the cytoplasm. Its subcellular location is the cytoskeleton. Its function is as follows. Actin-associated protein that may play a role in modulating actin-based shape. This is Synaptopodin 2-like protein (Synpo2l) from Mus musculus (Mouse).